Here is a 223-residue protein sequence, read N- to C-terminus: 2-phospho-L-lactate guanylyltransferase (223 aa).

Belongs to the CofC family. Homodimer.

It carries out the reaction (2S)-2-phospholactate + GTP + H(+) = (2S)-lactyl-2-diphospho-5'-guanosine + diphosphate. It participates in cofactor biosynthesis; coenzyme F420 biosynthesis. In terms of biological role, guanylyltransferase that catalyzes the activation of (2S)-2-phospholactate (2-PL) as (2S)-lactyl-2-diphospho-5'-guanosine, via the condensation of 2-PL with GTP. It is involved in the biosynthesis of coenzyme F420, a hydride carrier cofactor. This chain is 2-phospho-L-lactate guanylyltransferase, found in Methanothermobacter thermautotrophicus (strain ATCC 29096 / DSM 1053 / JCM 10044 / NBRC 100330 / Delta H) (Methanobacterium thermoautotrophicum).